The following is a 249-amino-acid chain: uncharacterized protein (249 aa).

Belongs to the HAD-like hydrolase superfamily. CbbY/CbbZ/Gph/YieH family.

This is an uncharacterized protein from Schizosaccharomyces pombe (strain 972 / ATCC 24843) (Fission yeast).